The chain runs to 358 residues: DNA polymerase IV (358 aa).

Residues 4-185 (IIHVDMDCFY…LPLIKIPGVG (182 aa)) enclose the UmuC domain. 2 residues coordinate Mg(2+): Asp8 and Asp103. The active site involves Glu104.

Belongs to the DNA polymerase type-Y family. Monomer. The cofactor is Mg(2+).

The protein resides in the cytoplasm. It carries out the reaction DNA(n) + a 2'-deoxyribonucleoside 5'-triphosphate = DNA(n+1) + diphosphate. Functionally, poorly processive, error-prone DNA polymerase involved in untargeted mutagenesis. Copies undamaged DNA at stalled replication forks, which arise in vivo from mismatched or misaligned primer ends. These misaligned primers can be extended by PolIV. Exhibits no 3'-5' exonuclease (proofreading) activity. May be involved in translesional synthesis, in conjunction with the beta clamp from PolIII. This is DNA polymerase IV from Shewanella halifaxensis (strain HAW-EB4).